The primary structure comprises 77 residues: Cell division topological specificity factor (77 aa).

Belongs to the MinE family.

In terms of biological role, prevents the cell division inhibition by proteins MinC and MinD at internal division sites while permitting inhibition at polar sites. This ensures cell division at the proper site by restricting the formation of a division septum at the midpoint of the long axis of the cell. This is Cell division topological specificity factor from Helicobacter pylori (strain Shi470).